We begin with the raw amino-acid sequence, 878 residues long: NUT family member 2A (878 aa).

4 disordered regions span residues 273-324, 417-566, 627-757, and 775-878; these read WSQG…DDSC, QKSQ…LSYT, KEKQ…EEEE, and WLPQ…RCSQ. Composition is skewed to pro residues over residues 278–288 and 427–444; these read PLPPPPPPAAQ and CLPP…PPAP. Over residues 476-487 the composition is skewed to basic residues; sequence TKARRPPPRPHR. A compositionally biased stretch (basic and acidic residues) spans 537–551; the sequence is EPEKQREEGEVKQPQ.

This sequence belongs to the NUT family.

The chain is NUT family member 2A (NUTM2A) from Homo sapiens (Human).